A 454-amino-acid polypeptide reads, in one-letter code: Bifunctional protein GlmU (454 aa).

A pyrophosphorylase region spans residues 1–228 (MTLPLHVVIL…PQHVEGANDP (228 aa)). Residues 10–13 (LAAG), K24, Q76, 81–82 (GT), 103–105 (YGD), G138, E153, N168, and N226 each bind UDP-N-acetyl-alpha-D-glucosamine. D105 provides a ligand contact to Mg(2+). Residue N226 coordinates Mg(2+). The interval 229 to 249 (WQLAQLERAWQLRAARTLCLQ) is linker. An N-acetyltransferase region spans residues 250-454 (GVRMADPARV…IEGWKRPTKK (205 aa)). Residues R332 and K350 each contribute to the UDP-N-acetyl-alpha-D-glucosamine site. H362 functions as the Proton acceptor in the catalytic mechanism. UDP-N-acetyl-alpha-D-glucosamine is bound by residues Y365 and N376. Acetyl-CoA is bound by residues A379, 385 to 386 (NY), S404, A422, and R439.

The protein in the N-terminal section; belongs to the N-acetylglucosamine-1-phosphate uridyltransferase family. This sequence in the C-terminal section; belongs to the transferase hexapeptide repeat family. In terms of assembly, homotrimer. Mg(2+) serves as cofactor.

The protein resides in the cytoplasm. It carries out the reaction alpha-D-glucosamine 1-phosphate + acetyl-CoA = N-acetyl-alpha-D-glucosamine 1-phosphate + CoA + H(+). It catalyses the reaction N-acetyl-alpha-D-glucosamine 1-phosphate + UTP + H(+) = UDP-N-acetyl-alpha-D-glucosamine + diphosphate. The protein operates within nucleotide-sugar biosynthesis; UDP-N-acetyl-alpha-D-glucosamine biosynthesis; N-acetyl-alpha-D-glucosamine 1-phosphate from alpha-D-glucosamine 6-phosphate (route II): step 2/2. Its pathway is nucleotide-sugar biosynthesis; UDP-N-acetyl-alpha-D-glucosamine biosynthesis; UDP-N-acetyl-alpha-D-glucosamine from N-acetyl-alpha-D-glucosamine 1-phosphate: step 1/1. It functions in the pathway bacterial outer membrane biogenesis; LPS lipid A biosynthesis. Its function is as follows. Catalyzes the last two sequential reactions in the de novo biosynthetic pathway for UDP-N-acetylglucosamine (UDP-GlcNAc). The C-terminal domain catalyzes the transfer of acetyl group from acetyl coenzyme A to glucosamine-1-phosphate (GlcN-1-P) to produce N-acetylglucosamine-1-phosphate (GlcNAc-1-P), which is converted into UDP-GlcNAc by the transfer of uridine 5-monophosphate (from uridine 5-triphosphate), a reaction catalyzed by the N-terminal domain. This Xanthomonas euvesicatoria pv. vesicatoria (strain 85-10) (Xanthomonas campestris pv. vesicatoria) protein is Bifunctional protein GlmU.